Here is a 204-residue protein sequence, read N- to C-terminus: Fruiting body protein SC7 (204 aa).

Positions 1–16 (MKLTVILLTAVLAASA) are cleaved as a signal peptide. In terms of domain architecture, SCP spans 62-185 (LKAHNNERAQ…KTLWYYVCNY (124 aa)). 3 N-linked (GlcNAc...) asparagine glycosylation sites follow: N80, N118, and N134.

It belongs to the CRISP family.

The protein resides in the secreted. The polypeptide is Fruiting body protein SC7 (SC7) (Schizophyllum commune (Split gill fungus)).